Here is a 345-residue protein sequence, read N- to C-terminus: NADPH-dependent curcumin reductase (345 aa).

A compositionally biased stretch (basic residues) spans 1 to 10 (MGQQKQRNRR). The tract at residues 1–24 (MGQQKQRNRRWVLASRPHGAPVPE) is disordered. 3 residues coordinate NADP(+): Lys186, Asn225, and Asn333.

Homodimer.

It carries out the reaction tetrahydrocurcumin + 2 NADP(+) = curcumin + 2 NADPH + 2 H(+). The catalysed reaction is tetrahydrocurcumin + NADP(+) = dihydrocurcumin + NADPH + H(+). It catalyses the reaction dihydrocurcumin + NADP(+) = curcumin + NADPH + H(+). Its activity is regulated as follows. Inhibited by thiol-specific reagents (p-chloromercuribenzoate and 5,5'-dithio-bis-2-nitrobenzoate). Functionally, catalyzes the metal-independent reduction of curcumin to dihydrocurcumin (DHC) as an intermediate product, followed by further reduction to tetrahydrocurcumin (THC) as an end product. It also acts on 3-octene-2-one, 3-hepten-2-one, resveratrol, and trans-2-octenal. This chain is NADPH-dependent curcumin reductase, found in Escherichia coli (strain K12).